The primary structure comprises 808 residues: Protein Ac66 (808 aa).

The segment covering P132–P141 has biased composition (pro residues). Positions P132–G151 are disordered.

Interacts with the putative E3 ligase IE0 and with viral ubiquitin/vUbi.

The protein localises to the host nucleus. It is found in the host cytoplasm. Its function is as follows. Plays an essential role in the efficient egress of nucleocapsids from the host nucleus to the cytoplasm. This is Protein Ac66 (Ac66) from Lepidoptera (butterflies and moths).